We begin with the raw amino-acid sequence, 734 residues long: Transcriptional regulator AacuB (734 aa).

The zn(2)-C6 fungal-type DNA-binding region spans 26–52; the sequence is CVLCQQRKIKCDRTFPCTNCVRAHVQC. A compositionally biased stretch (basic and acidic residues) spans 86–107; that stretch reads FDPLHTPTADHRSASDDGRDDL. The tract at residues 86–122 is disordered; that stretch reads FDPLHTPTADHRSASDDGRDDLPEGAESEGTFGEREK.

The protein localises to the nucleus. Its function is as follows. Transcriptional regulator; part of the gene cluster that mediates the biosynthesis of the tetrahydroxanthone dimer secalonic acid D. This chain is Transcriptional regulator AacuB, found in Aspergillus aculeatus (strain ATCC 16872 / CBS 172.66 / WB 5094).